A 251-amino-acid chain; its full sequence is Ubiquinone/menaquinone biosynthesis C-methyltransferase UbiE (251 aa).

3 residues coordinate S-adenosyl-L-methionine: T74, D92, and S132.

This sequence belongs to the class I-like SAM-binding methyltransferase superfamily. MenG/UbiE family.

The enzyme catalyses a 2-demethylmenaquinol + S-adenosyl-L-methionine = a menaquinol + S-adenosyl-L-homocysteine + H(+). It carries out the reaction a 2-methoxy-6-(all-trans-polyprenyl)benzene-1,4-diol + S-adenosyl-L-methionine = a 5-methoxy-2-methyl-3-(all-trans-polyprenyl)benzene-1,4-diol + S-adenosyl-L-homocysteine + H(+). The protein operates within quinol/quinone metabolism; menaquinone biosynthesis; menaquinol from 1,4-dihydroxy-2-naphthoate: step 2/2. Its pathway is cofactor biosynthesis; ubiquinone biosynthesis. Its function is as follows. Methyltransferase required for the conversion of demethylmenaquinol (DMKH2) to menaquinol (MKH2) and the conversion of 2-polyprenyl-6-methoxy-1,4-benzoquinol (DDMQH2) to 2-polyprenyl-3-methyl-6-methoxy-1,4-benzoquinol (DMQH2). The sequence is that of Ubiquinone/menaquinone biosynthesis C-methyltransferase UbiE from Rubrivivax gelatinosus (strain NBRC 100245 / IL144).